A 46-amino-acid polypeptide reads, in one-letter code: Escargot/snail protein homolog (46 aa).

3 C2H2-type zinc fingers span residues 1-4 (HIAH), 9-30 (CKCP…IRTH), and 36-46 (SVCQHCNRAFA).

Belongs to the snail C2H2-type zinc-finger protein family.

The protein resides in the nucleus. This chain is Escargot/snail protein homolog, found in Lithobius forficatus (Centipede).